A 426-amino-acid polypeptide reads, in one-letter code: Phosphomethylpyrimidine synthase (426 aa).

Substrate contacts are provided by residues Asn65, Met94, Tyr123, His162, 184-186, 225-228, and Glu264; these read SRG and DGLR. A Zn(2+)-binding site is contributed by His268. Tyr291 provides a ligand contact to substrate. A Zn(2+)-binding site is contributed by His332. The [4Fe-4S] cluster site is built by Cys409, Cys412, and Cys416.

This sequence belongs to the ThiC family. [4Fe-4S] cluster serves as cofactor.

The enzyme catalyses 5-amino-1-(5-phospho-beta-D-ribosyl)imidazole + S-adenosyl-L-methionine = 4-amino-2-methyl-5-(phosphooxymethyl)pyrimidine + CO + 5'-deoxyadenosine + formate + L-methionine + 3 H(+). It functions in the pathway cofactor biosynthesis; thiamine diphosphate biosynthesis. Functionally, catalyzes the synthesis of the hydroxymethylpyrimidine phosphate (HMP-P) moiety of thiamine from aminoimidazole ribotide (AIR) in a radical S-adenosyl-L-methionine (SAM)-dependent reaction. The polypeptide is Phosphomethylpyrimidine synthase (Thermodesulfovibrio yellowstonii (strain ATCC 51303 / DSM 11347 / YP87)).